Consider the following 536-residue polypeptide: CTP synthase (536 aa).

An amidoligase domain region spans residues methionine 1–leucine 267. Serine 13 contributes to the CTP binding site. Residue serine 13 participates in UTP binding. ATP-binding positions include serine 14–isoleucine 19 and aspartate 71. Mg(2+) contacts are provided by aspartate 71 and glutamate 141. CTP contacts are provided by residues aspartate 148 to glutamate 150, lysine 188 to glutamine 193, and lysine 224. Residues lysine 188–glutamine 193 and lysine 224 contribute to the UTP site. Positions lysine 292 to glutamine 534 constitute a Glutamine amidotransferase type-1 domain. Glycine 354 is an L-glutamine binding site. Cysteine 381 acts as the Nucleophile; for glutamine hydrolysis in catalysis. L-glutamine is bound by residues leucine 382 to glutamine 385, glutamate 405, and arginine 462. Active-site residues include histidine 507 and glutamate 509.

Belongs to the CTP synthase family. Homotetramer.

It catalyses the reaction UTP + L-glutamine + ATP + H2O = CTP + L-glutamate + ADP + phosphate + 2 H(+). The catalysed reaction is L-glutamine + H2O = L-glutamate + NH4(+). The enzyme catalyses UTP + NH4(+) + ATP = CTP + ADP + phosphate + 2 H(+). It functions in the pathway pyrimidine metabolism; CTP biosynthesis via de novo pathway; CTP from UDP: step 2/2. Allosterically activated by GTP, when glutamine is the substrate; GTP has no effect on the reaction when ammonia is the substrate. The allosteric effector GTP functions by stabilizing the protein conformation that binds the tetrahedral intermediate(s) formed during glutamine hydrolysis. Inhibited by the product CTP, via allosteric rather than competitive inhibition. Its function is as follows. Catalyzes the ATP-dependent amination of UTP to CTP with either L-glutamine or ammonia as the source of nitrogen. Regulates intracellular CTP levels through interactions with the four ribonucleotide triphosphates. The protein is CTP synthase of Prochlorococcus marinus subsp. pastoris (strain CCMP1986 / NIES-2087 / MED4).